The primary structure comprises 109 residues: MAERKQGGQNNGAGSSVITEVKPKTQKPSLYRVLILNDDYTPMEFVVYVLERFFNKSREDATRIMLHVHQHGVGVCGVFTYEVAETKVAQVIDSARRHQHPLQCTMEKD.

The interval 1–21 (MAERKQGGQNNGAGSSVITEV) is disordered.

Belongs to the ClpS family. Binds to the N-terminal domain of the chaperone ClpA.

In terms of biological role, involved in the modulation of the specificity of the ClpAP-mediated ATP-dependent protein degradation. The protein is ATP-dependent Clp protease adapter protein ClpS of Caulobacter sp. (strain K31).